The chain runs to 759 residues: Subtilisin-like serine-protease S (759 aa).

An N-terminal signal peptide occupies residues 1–22 (MGSAKILSFTLLLFVGYTLVHG). The Inhibitor I9 domain maps to 28 to 105 (YIVYMGDRSH…SVFESKMNKL (78 aa)). The region spanning 110 to 613 (SWDFLGLDTV…SGHVNPVASL (504 aa)) is the Peptidase S8 domain. Asp-139 (charge relay system) is an active-site residue. Asn-170 is a glycosylation site (N-linked (GlcNAc...) asparagine). His-215 acts as the Charge relay system in catalysis. N-linked (GlcNAc...) asparagine glycans are attached at residues Asn-230 and Asn-388. The region spanning 390–462 (SFCKEHTLDP…MIGQDAVEEL (73 aa)) is the PA domain. The active-site Charge relay system is Ser-545. Asn-593, Asn-642, and Asn-671 each carry an N-linked (GlcNAc...) asparagine glycan.

The protein belongs to the peptidase S8 family.

It localises to the secreted. It is found in the extracellular space. The protein resides in the apoplast. Functionally, required for arbuscular mycorrhiza (AM) development during AM symbiosis with AM fungi (e.g. Glomeromycota intraradices). This is Subtilisin-like serine-protease S from Lotus japonicus (Lotus corniculatus var. japonicus).